Consider the following 347-residue polypeptide: Protein RecA (347 aa).

66 to 73 (GPESSGKT) contributes to the ATP binding site.

This sequence belongs to the RecA family.

It localises to the cytoplasm. In terms of biological role, can catalyze the hydrolysis of ATP in the presence of single-stranded DNA, the ATP-dependent uptake of single-stranded DNA by duplex DNA, and the ATP-dependent hybridization of homologous single-stranded DNAs. It interacts with LexA causing its activation and leading to its autocatalytic cleavage. This Allochromatium vinosum (Chromatium vinosum) protein is Protein RecA.